The sequence spans 645 residues: Cysteine-rich receptor-like protein kinase 10 (645 aa).

The N-terminal stretch at Met1–Ala27 is a signal peptide. Gnk2-homologous domains lie at Gln28 to Phe132 and Ser140 to Phe251. Residues Gln28–Ser283 are Extracellular-facing. Asn39 and Asn91 each carry an N-linked (GlcNAc...) asparagine glycan. Disulfide bonds link Cys86–Cys95 and Cys98–Cys123. Residues Asn151 and Asn169 are each glycosylated (N-linked (GlcNAc...) asparagine). Cystine bridges form between Cys204-Cys213 and Cys216-Cys242. A helical membrane pass occupies residues Ala284–Phe304. Topologically, residues Cys305–Ser645 are cytoplasmic. A Protein kinase domain is found at Phe348–Leu619. ATP-binding positions include Leu354–Val362 and Lys376. Catalysis depends on Asp473, which acts as the Proton acceptor.

The protein belongs to the protein kinase superfamily. Ser/Thr protein kinase family. CRK subfamily.

The protein resides in the membrane. Functionally, involved in disease resistance. Required for NPR1/NH1-mediated immunity to the bacterial blight pathogen Xanthomomas oryzae pv. oryzae (Xoo). Required for the benzothiadiazole (BTH)-induced immune response. Probably regulated by the transcription factor TGA2.1. The protein is Cysteine-rich receptor-like protein kinase 10 of Oryza sativa subsp. japonica (Rice).